Reading from the N-terminus, the 429-residue chain is Ribosomal RNA small subunit methyltransferase B (429 aa).

Residues 254–260, D277, D303, and D322 contribute to the S-adenosyl-L-methionine site; that span reads CAAPGGK. C375 (nucleophile) is an active-site residue. Positions 397–419 are disordered; that stretch reads ALSETGTPDQPGQQNLPGGEEGD. The segment covering 400–412 has biased composition (polar residues); it reads ETGTPDQPGQQNL.

This sequence belongs to the class I-like SAM-binding methyltransferase superfamily. RsmB/NOP family.

It localises to the cytoplasm. The catalysed reaction is cytidine(967) in 16S rRNA + S-adenosyl-L-methionine = 5-methylcytidine(967) in 16S rRNA + S-adenosyl-L-homocysteine + H(+). Its function is as follows. Specifically methylates the cytosine at position 967 (m5C967) of 16S rRNA. The chain is Ribosomal RNA small subunit methyltransferase B from Salmonella choleraesuis (strain SC-B67).